Consider the following 556-residue polypeptide: Undecaprenyl phosphate-alpha-4-amino-4-deoxy-L-arabinose arabinosyl transferase (556 aa).

11 helical membrane passes run 5–25 (MIKL…LLPL), 88–108 (FASV…ALLL), 116–136 (LLAA…TYSV), 179–199 (FMTK…PVAL), 207–227 (LLLF…PWAL), 258–278 (APFW…LALL), 296–316 (FLLL…KGKL), 319–339 (YILP…SGLA), 355–375 (LAFG…IIMP), 384–404 (LTIV…AVSL), and 410–430 (WGYL…GSIP).

This sequence belongs to the glycosyltransferase 83 family.

The protein resides in the cell inner membrane. The enzyme catalyses 4-amino-4-deoxy-alpha-L-arabinopyranosyl di-trans,octa-cis-undecaprenyl phosphate + lipid IVA = lipid IIA + di-trans,octa-cis-undecaprenyl phosphate.. The protein operates within lipopolysaccharide metabolism; 4-amino-4-deoxy-beta-L-arabinose-lipid A biosynthesis. Catalyzes the transfer of the L-Ara4N moiety of the glycolipid undecaprenyl phosphate-alpha-L-Ara4N to lipid A. The modified arabinose is attached to lipid A and is required for resistance to polymyxin and cationic antimicrobial peptides. The chain is Undecaprenyl phosphate-alpha-4-amino-4-deoxy-L-arabinose arabinosyl transferase from Pectobacterium carotovorum subsp. carotovorum (strain PC1).